Consider the following 120-residue polypeptide: MKKLTKTNSHRQQKLASIINEALIEILRRGKMLDSRLFDCPLTITKVIVTADLKIANCYFLPFNTKLTIDEIMDALSNSKNAIRNFITNKINMKFSPDIRFHYDHGFDNAIKVEELLKNI.

It belongs to the RbfA family. As to quaternary structure, monomer. Binds 30S ribosomal subunits, but not 50S ribosomal subunits or 70S ribosomes.

It localises to the cytoplasm. In terms of biological role, one of several proteins that assist in the late maturation steps of the functional core of the 30S ribosomal subunit. Associates with free 30S ribosomal subunits (but not with 30S subunits that are part of 70S ribosomes or polysomes). Required for efficient processing of 16S rRNA. May interact with the 5'-terminal helix region of 16S rRNA. The chain is Ribosome-binding factor A from Rickettsia felis (strain ATCC VR-1525 / URRWXCal2) (Rickettsia azadi).